The following is a 137-amino-acid chain: Small ribosomal subunit protein uS8 (137 aa).

It belongs to the universal ribosomal protein uS8 family. Part of the 30S ribosomal subunit. Contacts proteins S5 and S12.

One of the primary rRNA binding proteins, it binds directly to 16S rRNA central domain where it helps coordinate assembly of the platform of the 30S subunit. The polypeptide is Small ribosomal subunit protein uS8 (Metamycoplasma arthritidis (strain 158L3-1) (Mycoplasma arthritidis)).